The chain runs to 199 residues: Cytochrome b (199 aa).

4 consecutive transmembrane segments (helical) span residues 1–8 (LTGLFLAM), 32–53 (WLIR…YFHI), 68–88 (WNIG…GYVL), and 133–153 (FFAF…LHLL). Residues histidine 38 and histidine 52 each coordinate heme b. Positions 137 and 151 each coordinate heme b. Position 156 (histidine 156) interacts with a ubiquinone. A helical membrane pass occupies residues 181–199 (YKDLLGFAILLVALASLAH).

This sequence belongs to the cytochrome b family. As to quaternary structure, the cytochrome bc1 complex contains 3 respiratory subunits (MT-CYB, CYC1 and UQCRFS1), 2 core proteins (UQCRC1 and UQCRC2) and probably 6 low-molecular weight proteins. Requires heme b as cofactor.

It localises to the mitochondrion inner membrane. Its function is as follows. Component of the ubiquinol-cytochrome c reductase complex (complex III or cytochrome b-c1 complex) that is part of the mitochondrial respiratory chain. The b-c1 complex mediates electron transfer from ubiquinol to cytochrome c. Contributes to the generation of a proton gradient across the mitochondrial membrane that is then used for ATP synthesis. This is Cytochrome b (mt-cyb) from Sarda chiliensis (Pacific bonito).